Consider the following 730-residue polypeptide: Aspyridones cluster regulator apdR (730 aa).

The segment at residues 20 to 46 (CTECRRRKIRCDQATPCRHCEKAALRC) is a DNA-binding region (zn(2)-C6 fungal-type).

It is found in the nucleus. In terms of biological role, transcription factor involved in regulation of gene cluster that mediates the biosynthesis of aspyridones. This is Aspyridones cluster regulator apdR from Emericella nidulans (strain FGSC A4 / ATCC 38163 / CBS 112.46 / NRRL 194 / M139) (Aspergillus nidulans).